We begin with the raw amino-acid sequence, 46 residues long: Escargot/snail protein homolog (46 aa).

3 consecutive C2H2-type zinc fingers follow at residues 1–4 (IRTH), 8–30 (CKCP…TTHH), and 36–46 (FSCQHCNRAFA).

This sequence belongs to the snail C2H2-type zinc-finger protein family.

It is found in the nucleus. The chain is Escargot/snail protein homolog from Oryzias latipes (Japanese rice fish).